The sequence spans 356 residues: Protein MGF 360-10L (356 aa).

The stretch at 58–90 (DLNTALMIAAKENNYQLIKLFTEWGANINYGYI) is one ANK repeat. N-linked (GlcNAc...) asparagine; by host glycosylation is present at asparagine 125. Helical transmembrane passes span 206-228 (LNTW…YLYE) and 249-271 (NFLT…LAAI). Asparagine 352 carries an N-linked (GlcNAc...) asparagine; by host glycan.

Belongs to the asfivirus MGF 360 family.

The protein localises to the host membrane. Its function is as follows. Plays a role in virus cell tropism, and may be required for efficient virus replication in macrophages. In Ornithodoros (relapsing fever ticks), this protein is Protein MGF 360-10L.